A 271-amino-acid polypeptide reads, in one-letter code: Pyrroline-5-carboxylate reductase (271 aa).

This sequence belongs to the pyrroline-5-carboxylate reductase family.

It localises to the cytoplasm. The enzyme catalyses L-proline + NADP(+) = (S)-1-pyrroline-5-carboxylate + NADPH + 2 H(+). It catalyses the reaction L-proline + NAD(+) = (S)-1-pyrroline-5-carboxylate + NADH + 2 H(+). It participates in amino-acid biosynthesis; L-proline biosynthesis; L-proline from L-glutamate 5-semialdehyde: step 1/1. In terms of biological role, catalyzes the reduction of 1-pyrroline-5-carboxylate (PCA) to L-proline. In Staphylococcus haemolyticus (strain JCSC1435), this protein is Pyrroline-5-carboxylate reductase.